We begin with the raw amino-acid sequence, 205 residues long: uncharacterized protein (205 aa).

An N-terminal signal peptide occupies residues 1–40 (MSAGKSYRKKMKQRRMNMKISKYALGILMLSLVFVLSACG). Residues 44 to 82 (STKESTHDNHSDSSTHEEMDHSGSADVPEGLQESKNPKY) form a disordered region. Residues 47 to 66 (ESTHDNHSDSSTHEEMDHSG) show a composition bias toward basic and acidic residues.

This is an uncharacterized protein from Bacillus subtilis (strain 168).